Reading from the N-terminus, the 441-residue chain is tRNA-2-methylthio-N(6)-dimethylallyladenosine synthase (441 aa).

Residues 5–121 (KKLYLETFGC…LQGMVAAAEE (117 aa)) enclose the MTTase N-terminal domain. Residues Cys14, Cys50, Cys84, Cys159, Cys163, and Cys166 each contribute to the [4Fe-4S] cluster site. Residues 145–375 (AEGGVTRFVT…QAAQKKTTLA (231 aa)) form the Radical SAM core domain. One can recognise a TRAM domain in the interval 378–440 (RSLEGTVQKV…QTLLKGEIVH (63 aa)).

Belongs to the methylthiotransferase family. MiaB subfamily. As to quaternary structure, monomer. Requires [4Fe-4S] cluster as cofactor.

It localises to the cytoplasm. The enzyme catalyses N(6)-dimethylallyladenosine(37) in tRNA + (sulfur carrier)-SH + AH2 + 2 S-adenosyl-L-methionine = 2-methylsulfanyl-N(6)-dimethylallyladenosine(37) in tRNA + (sulfur carrier)-H + 5'-deoxyadenosine + L-methionine + A + S-adenosyl-L-homocysteine + 2 H(+). Functionally, catalyzes the methylthiolation of N6-(dimethylallyl)adenosine (i(6)A), leading to the formation of 2-methylthio-N6-(dimethylallyl)adenosine (ms(2)i(6)A) at position 37 in tRNAs that read codons beginning with uridine. This Citrifermentans bemidjiense (strain ATCC BAA-1014 / DSM 16622 / JCM 12645 / Bem) (Geobacter bemidjiensis) protein is tRNA-2-methylthio-N(6)-dimethylallyladenosine synthase.